Reading from the N-terminus, the 316-residue chain is Pantothenate kinase (316 aa).

95 to 102 (GSVAVGKS) is an ATP binding site.

Belongs to the prokaryotic pantothenate kinase family.

The protein localises to the cytoplasm. It catalyses the reaction (R)-pantothenate + ATP = (R)-4'-phosphopantothenate + ADP + H(+). The protein operates within cofactor biosynthesis; coenzyme A biosynthesis; CoA from (R)-pantothenate: step 1/5. The protein is Pantothenate kinase of Shewanella sp. (strain ANA-3).